Reading from the N-terminus, the 349-residue chain is Phosphorylcholine phosphatase (349 aa).

The signal sequence occupies residues 1–22 (MTFAKGILAALALAAAVGQASA). The active-site Nucleophile is the Asp-53. Residues Asp-53 and Asp-55 each coordinate Mg(2+). Asp-55 acts as the Proton donor in catalysis. An intrachain disulfide couples Cys-109 to Cys-116. Residue Asp-284 coordinates Mg(2+).

This sequence belongs to the HAD-like hydrolase superfamily. As to quaternary structure, monomer. Homodimer. Homotetramer. The cofactor is Mg(2+).

It is found in the periplasm. The enzyme catalyses phosphocholine + H2O = choline + phosphate. The catalysed reaction is phosphoethanolamine + H2O = ethanolamine + phosphate. With respect to regulation, activity is inhibited by high concentrations of phosphorylcholine, phosphorylethanolamine, choline or betaine. Displays different properties depending on the substrate utilized, the pH conditions as well as the presence or absence of metal ions. At pH 5, activity is inhibited by Al(3+) ions. At pH 7.4, the enzyme cannot catalyze the hydrolysis of pNPP, phosphorylethanolamine is a poor substrate in either the presence or absence of divalent cations, and activity measured with phosphorylcholine is independent of divalent cations or is not inhibited by Al(3+) ions. Mg(2+) produces identical activation at pH 5.0 and 7.4, but Zn(2+) is an activator at pH 5.0 and becomes an inhibitor at pH 7.4. This inhibition at pH 7.4 may be due to a transition from octahedral to tetrahedral coordination geometry, which is produced by hydrolysis of the Zn-hexacoordinated complex. Its function is as follows. Catalyzes the hydrolysis of phosphorylcholine (PCho) to produce choline and inorganic phosphate. Can also hydrolyze phosphorylethanolamine and the nonphysiological substrate p-nitrophenylphosphate (pNPP). Shows higher affinity and catalytic efficiency with phosphorylcholine as substrate. Is probably involved in virulence. The bacteria may break down various host compounds or host cell membranes through the coordinated action of phospholipase C and phosphocholine phosphatase. The final consequence of the action of these enzymes is an increase of the free choline concentration, which may promote the pathogenicity of P.aeruginosa. The polypeptide is Phosphorylcholine phosphatase (Pseudomonas aeruginosa (strain ATCC 15692 / DSM 22644 / CIP 104116 / JCM 14847 / LMG 12228 / 1C / PRS 101 / PAO1)).